We begin with the raw amino-acid sequence, 249 residues long: 14-3-3-like protein D (249 aa).

The protein belongs to the 14-3-3 family.

This chain is 14-3-3-like protein D, found in Nicotiana tabacum (Common tobacco).